The following is a 197-amino-acid chain: MDHHSKAKELLQQRDELDGKIKELMLVLETNNSTMDSPLLDAEGYPLNTIDVYAVRHARHDLICLRNDRAALTEKIVVEMENENKEVSGQTATSEEKPVHRTSNEPFVKISSVVELSPADIGGFRKDDLIIQYGNLHHGNFNDMQEVAQITKQSEDKIIRVTVIRENRPVRLEICPKKWSGPGLLGCNIVPISGANV.

The PDZ domain occupies Lys-75–Glu-166.

The protein belongs to the proteasome subunit p27 family.

Functionally, acts as a chaperone during the assembly of the 26S proteasome, specifically of the base subcomplex of the 19S regulatory complex (RC). The polypeptide is Probable 26S proteasome non-ATPase regulatory subunit 9 (psmd-9) (Caenorhabditis elegans).